The chain runs to 431 residues: Serine/threonine-protein kinase PknA (431 aa).

Residues 1–339 (MSPRVGVTLS…RRTFSSGQRA (339 aa)) are Cytoplasmic-facing. Residues 13–272 (YRLQRLIATG…SGGPFADAVA (260 aa)) enclose the Protein kinase domain. ATP is bound by residues 19-27 (IATGGMGQV) and Lys-42. The Proton acceptor role is filled by Asp-141. Residues 276–333 (AGRRPPRPSQTPPPGRAAPAAIPSGTTARVAANSAGRTAASRRSRPATGGHRPPRRTF) form a disordered region. Residues 282 to 291 (RPSQTPPPGR) are compositionally biased toward pro residues. The segment covering 292-314 (AAPAAIPSGTTARVAANSAGRTA) has biased composition (low complexity). Residues 340 to 360 (LLWAAGVLGALAIIIAVLLVI) traverse the membrane as a helical segment. Over 361 to 431 (KAPGDNSPQQ…ASLARYEIAQ (71 aa)) the chain is Extracellular. The tract at residues 366 to 418 (NSPQQAPTPTVTTTGNPPASNTGGTDASPRLNWTERGETRHSGLQSWVVPPTP) is disordered. The span at 368–384 (PQQAPTPTVTTTGNPPA) shows a compositional bias: low complexity.

This sequence belongs to the protein kinase superfamily. Ser/Thr protein kinase family. In terms of processing, autophosphorylated.

It localises to the cell membrane. It carries out the reaction L-seryl-[protein] + ATP = O-phospho-L-seryl-[protein] + ADP + H(+). The enzyme catalyses L-threonyl-[protein] + ATP = O-phospho-L-threonyl-[protein] + ADP + H(+). Functionally, protein kinase that regulates many aspects of mycobacterial physiology. Is a key component of a signal transduction pathway that regulates cell growth, cell shape and cell division via phosphorylation of target proteins. The protein is Serine/threonine-protein kinase PknA (pknA) of Mycobacterium bovis (strain ATCC BAA-935 / AF2122/97).